A 204-amino-acid chain; its full sequence is Protein PAXX (204 aa).

The 43-residue stretch at 37–79 (FNLYVTDAAELWSTCFTPDSLAALKARFGLSAAEDITPRFRAA) folds into the PISA domain. Ser134 bears the Phosphoserine mark. Residues 143–204 (EETAVSPRKS…PAGGVDFDET (62 aa)) form a disordered region. Thr145 is subject to Phosphothreonine. A phosphoserine mark is found at Ser148 and Ser152. Residues 171-204 (GPGPGVRRRCPGESLINPGFKSKKPAGGVDFDET) form a mediates interaction with XRCC5/Ku80 and XRCC6/Ku70 and association with the non-homologous end joining core complex region. An XLM motif is present at residues 190–204 (FKSKKPAGGVDFDET).

Belongs to the XRCC4-XLF family. PAXX subfamily. As to quaternary structure, homodimer. Interacts with the DNA-bound XRCC5/Ku80 and XRCC6/Ku70 heterodimer (Ku complex); the interaction is direct. Associated component of the non-homologous end joining (NHEJ) complex, composed of the core proteins PRKDC, LIG4, XRCC4, XRCC6/Ku70, XRCC5/Ku86 and NHEJ1/XLF. Interacts with POLL (DNA polymerase lambda); promoting POLL recruitment to double-strand breaks (DSBs) and stimulation of the end-filling activity of POLL. Phosphorylation may inhibit interaction with the DNA-bound XRCC5/Ku80 and XRCC6/Ku70 heterodimer (Ku complex).

It is found in the nucleus. It localises to the chromosome. The protein localises to the cytoplasm. In terms of biological role, non-essential DNA repair protein involved in DNA non-homologous end joining (NHEJ); participates in double-strand break (DSB) repair and V(D)J recombination. May act as a scaffold required for accumulation of the Ku heterodimer, composed of XRCC5/Ku80 and XRCC6/Ku70, at double-strand break sites and promote the assembly and/or stability of the NHEJ machinery. Involved in NHEJ by promoting the ligation of blunt-ended DNA ends. Together with NHEJ1/XLF, collaborates with DNA polymerase lambda (POLL) to promote joining of non-cohesive DNA ends. Constitutes a non-essential component of classical NHEJ: has a complementary but distinct function with NHEJ1/XLF in DNA repair. Able to restrict infection by herpesvirus 1 (HSV-1) via an unknown mechanism. The polypeptide is Protein PAXX (Homo sapiens (Human)).